A 381-amino-acid polypeptide reads, in one-letter code: Prostatic acid phosphatase (381 aa).

An N-terminal signal peptide occupies residues 1-31; the sequence is MRAVPLPLSRTASLSLGFLLLLSLCLDPGQA. Arginine 42 contributes to the substrate binding site. Histidine 43 functions as the Nucleophile in the catalytic mechanism. Arginine 46 is a binding site for substrate. Asparagine 93 is a glycosylation site (N-linked (GlcNAc...) asparagine). Arginine 110 is a binding site for substrate. 3 disulfide bridges follow: cysteine 160/cysteine 371, cysteine 214/cysteine 312, and cysteine 346/cysteine 350. A glycan (N-linked (GlcNAc...) asparagine) is linked at asparagine 219. Histidine 288 serves as a coordination point for substrate. The active-site Proton donor is aspartate 289. N-linked (GlcNAc...) asparagine glycosylation is present at asparagine 332.

Belongs to the histidine acid phosphatase family. In terms of assembly, homodimer; dimer formation is required for phosphatase activity. In terms of tissue distribution, expressed in salivary gland, thymus and thyroid gland. Widely expressed in prostate lobes, brain, kidney, liver, lung, muscle, placenta, salivary gland, spleen, thyroid and thymus. Locates to Schwann cells and fibroblasts. Expressed in peptidergic and non-peptidergic nociceptive (pain-sensing) neurons. Preferentially expressed in non-peptidergic doral root ganglia neurons.

The protein localises to the secreted. It is found in the cell membrane. The protein resides in the lysosome membrane. The catalysed reaction is a phosphate monoester + H2O = an alcohol + phosphate. It catalyses the reaction a ribonucleoside 5'-phosphate + H2O = a ribonucleoside + phosphate. It carries out the reaction 1-(9Z-octadecenoyl)-sn-glycero-3-phosphate + H2O = 1-(9Z-octadecenoyl)-sn-glycerol + phosphate. The enzyme catalyses O-phospho-L-tyrosyl-[protein] + H2O = L-tyrosyl-[protein] + phosphate. A non-specific tyrosine phosphatase that dephosphorylates a diverse number of substrates under acidic conditions (pH 4-6) including alkyl, aryl, and acyl orthophosphate monoesters and phosphorylated proteins. Has lipid phosphatase activity and inactivates lysophosphatidic acid in seminal plasma. In terms of biological role, in addition to its tyrosine phosphatase activity, also has ecto-5'-nucleotidase activity in dorsal root ganglion (DRG) neurons. Generates adenosine from AMP. This extracellular adenosine leads to a decrease in chronic pain by activating A1R in nociceptive neurons. The protein is Prostatic acid phosphatase (Acp3) of Mus musculus (Mouse).